The chain runs to 92 residues: RNA-binding protein Hfq (92 aa).

One can recognise a Sm domain in the interval 9 to 68 (DPFLNALRRERVPVSIYLVNGIKLQGQVESFDQFVILLKNTVSQMVYKHAISTVVPSRPF).

Belongs to the Hfq family. In terms of assembly, homohexamer.

RNA chaperone that binds small regulatory RNA (sRNAs) and mRNAs to facilitate mRNA translational regulation in response to envelope stress, environmental stress and changes in metabolite concentrations. Also binds with high specificity to tRNAs. The chain is RNA-binding protein Hfq from Shewanella halifaxensis (strain HAW-EB4).